The primary structure comprises 226 residues: Cytidylate kinase (226 aa).

12–20 (GPSGAGKGT) is a binding site for ATP.

Belongs to the cytidylate kinase family. Type 1 subfamily.

It is found in the cytoplasm. It carries out the reaction CMP + ATP = CDP + ADP. The enzyme catalyses dCMP + ATP = dCDP + ADP. In Xanthomonas campestris pv. campestris (strain B100), this protein is Cytidylate kinase.